The chain runs to 112 residues: Replication initiation control protein YabA (112 aa).

Residues histidine 85, cysteine 87, cysteine 101, and cysteine 104 each contribute to the Zn(2+) site.

The protein belongs to the YabA family. In terms of assembly, homotetramer. Interacts with both DnaA and DnaN, acting as a bridge between these two proteins. Requires Zn(2+) as cofactor.

It is found in the cytoplasm. Its subcellular location is the nucleoid. Involved in control of chromosome replication initiation. Inhibits the cooperative binding of DnaA to the oriC region, thus negatively regulating initiation of chromosome replication. Inhibits the ability of DnaA-ATP to form a helix on DNA; does not disassemble preformed DnaA-DNA helices. Decreases the residence time of DnaA on the chromosome at its binding sites (oriC, replication forks and promoter-binding sites). Tethers DnaA to the replication machinery via the DNA polymerase beta sliding clamp subunit (dnaN). Associates with oriC and other DnaA targets on the chromosome in a DnaA-dependent manner. The sequence is that of Replication initiation control protein YabA from Lacticaseibacillus casei (strain BL23) (Lactobacillus casei).